Reading from the N-terminus, the 74-residue chain is Large ribosomal subunit protein bL31 (74 aa).

Cys16, Cys18, Cys38, and Cys41 together coordinate Zn(2+).

Belongs to the bacterial ribosomal protein bL31 family. Type A subfamily. As to quaternary structure, part of the 50S ribosomal subunit. Zn(2+) is required as a cofactor.

Binds the 23S rRNA. This chain is Large ribosomal subunit protein bL31, found in Mycolicibacterium vanbaalenii (strain DSM 7251 / JCM 13017 / BCRC 16820 / KCTC 9966 / NRRL B-24157 / PYR-1) (Mycobacterium vanbaalenii).